Reading from the N-terminus, the 332-residue chain is MEDKKKIIFSGIKPSGDLTLGNYLGAIKNWTKLQEEYDCYFCVVDLHAITVKQLPADLRRRTLEVLAIYIASGINPEENTLFIQSHVPAHSEASWLLTCNSYMGELSRMTQYKDKSKKMGDSIGAGLFNYPVLMAADILLYNADLVPVGKDQMQHLELARDIGTRFNNSYSKTFTIPEGYVPKEGAKIMDLQDPSKKMSKSDANPNGFILIMDEPNVIRKKISRAVTDSIGIVNYTDEQPGVKNLINILCAIKGYTPDEVVKMYDGKGYAEFKNDVAEAIVEELAPVQEKVKALLGDKKALEEIYKKGAEKANYAAMKTLRKMQKKIGLIPR.

ATP is bound by residues 13-15 (KPS) and 21-22 (GN). The short motif at 14 to 22 (PSGDLTLGN) is the 'HIGH' region element. D137 contributes to the L-tryptophan binding site. ATP contacts are provided by residues 149–151 (GKD), I188, and 197–201 (KMSKS). The 'KMSKS' region signature appears at 197–201 (KMSKS).

Belongs to the class-I aminoacyl-tRNA synthetase family. Homodimer.

Its subcellular location is the cytoplasm. It carries out the reaction tRNA(Trp) + L-tryptophan + ATP = L-tryptophyl-tRNA(Trp) + AMP + diphosphate + H(+). Its function is as follows. Catalyzes the attachment of tryptophan to tRNA(Trp). The sequence is that of Tryptophan--tRNA ligase from Clostridium perfringens (strain 13 / Type A).